Consider the following 473-residue polypeptide: JmjC domain-containing protein 4 (473 aa).

One can recognise a JmjC domain in the interval 140–433 (PTDGLLTDFS…DFDHPYLDRN (294 aa)). The disordered stretch occupies residues 452-473 (TNKKNEKRPAEDDSPSQKKTCQ).

Its subcellular location is the nucleus. Functionally, has a role in meiosis. The protein is JmjC domain-containing protein 4 (jmj4) of Schizosaccharomyces pombe (strain 972 / ATCC 24843) (Fission yeast).